The following is a 23-amino-acid chain: Phallacidin proprotein 1 (23 aa).

A propeptide is located at residue proline 1. Residues 2–8 constitute a cross-link (cyclopeptide (Ala-Pro)); it reads AWLVDCP. Residues 3 to 7 constitute a cross-link (2'-cysteinyl-6'-hydroxytryptophan sulfoxide (Trp-Cys)); that stretch reads WLVDC. A propeptide spanning residues 9-23 is cleaved from the precursor; sequence CVGDDVNRLLTRGER.

This sequence belongs to the MSDIN fungal toxin family. Processed by the macrocyclase-peptidase enzyme POPB to yield a toxic cyclic heptapeptide. POPB first removes 10 residues from the N-terminus. Conformational trapping of the remaining peptide forces the enzyme to release this intermediate rather than proceed to macrocyclization. The enzyme rebinds the remaining peptide in a different conformation and catalyzes macrocyclization of the N-terminal 7 residues.

Toxin that belongs to the bicyclic heptapeptides called phallotoxins. Although structurally related to amatoxins, phallotoxins have a different mode of action, which is the stabilization of F-actin. Phallotoxins are poisonous when administered parenterally, but not orally because of poor absorption. This is Phallacidin proprotein 1 from Amanita exitialis (Guangzhou destroying angel).